The primary structure comprises 36 residues: Pancreatic polypeptide (36 aa).

Residue Phe-36 is modified to Phenylalanine amide.

This sequence belongs to the NPY family.

The protein localises to the secreted. Hormone secreted by pancreatic cells that acts as a regulator of pancreatic and gastrointestinal functions. The protein is Pancreatic polypeptide (ppy) of Rana temporaria (European common frog).